A 193-amino-acid chain; its full sequence is Ion-translocating oxidoreductase complex subunit A (193 aa).

6 helical membrane-spanning segments follow: residues 5–25 (ILLI…FLGL), 39–59 (IGMG…AYLV), 65–85 (IPLE…AVIV), 102–122 (LLGI…VALL), 134–154 (VLYG…FSAL), and 171–191 (SIAL…TGLV).

It belongs to the NqrDE/RnfAE family. As to quaternary structure, the complex is composed of six subunits: RnfA, RnfB, RnfC, RnfD, RnfE and RnfG.

The protein resides in the cell inner membrane. Part of a membrane-bound complex that couples electron transfer with translocation of ions across the membrane. This chain is Ion-translocating oxidoreductase complex subunit A, found in Glaesserella parasuis serovar 5 (strain SH0165) (Haemophilus parasuis).